A 447-amino-acid chain; its full sequence is GTPase Der (447 aa).

2 consecutive EngA-type G domains span residues 4 to 165 (QIIT…PEEE) and 180 to 357 (LQIV…KIWN). Residues 10–17 (GRPNVGKS), 57–61 (DTPGL), 119–122 (NKCE), 186–193 (GRPNAGKS), 233–237 (DTAGL), and 298–301 (NKWD) contribute to the GTP site. In terms of domain architecture, KH-like spans 358-443 (KKITTSKLNE…PIRFIYVKTK (86 aa)).

Belongs to the TRAFAC class TrmE-Era-EngA-EngB-Septin-like GTPase superfamily. EngA (Der) GTPase family. In terms of assembly, associates with the 50S ribosomal subunit.

In terms of biological role, GTPase that plays an essential role in the late steps of ribosome biogenesis. In Rickettsia conorii (strain ATCC VR-613 / Malish 7), this protein is GTPase Der.